The sequence spans 372 residues: MTAAQNAPIPEAGKKVMSTVTLAPALGFVPVAVHFDLFGCLQEIGKPATAQDVCNIHRTRYGDTNLSVSLANDTLFLMGGLGFLDLLPDDVYQANDVTRYLVDTPSAQHGAMHFTSEGLLASAFLMRRLMDTNFEYPFQECDTPFQYAYKLMGNDSLAREHVYSVMHHTGRLDSFNTFMTGKFGRWGTMPDRVRKLGYDLDGLMQSTAPEKLRIVDIGGGRGELLLEMQAAYPHLLQKENLVLQEYNADIGVVPKVTEMAWNYKEDASEQPVKGALLYSMAHVLHNLSDIESIKLLAKVARVMAPTSRLLIQEFTKNAASSTTHAAMILMHAGRERTRAEWRDLAAFAGLEITFEAYPPNGECLVEMRKVLN.

Tryptophan 186 serves as a coordination point for S-adenosyl-L-methionine. Catalysis depends on histidine 285, which acts as the Proton acceptor.

This sequence belongs to the class I-like SAM-binding methyltransferase superfamily. Cation-independent O-methyltransferase family.

It functions in the pathway secondary metabolite biosynthesis. Cytochrome P450 monooxygenase; part of the gene cluster that mediates the biosynthesis of bifonsecin B, a dimeric gamma-naphthopyrone. The first step in the biosynthesis of bifonsecin B is the production of gamma-naphthopyrone precursor YWA1 by the non-reducing polyketide synthase albA, via condensation of one acetyl-CoA starter unit with 6 malonyl-CoA units. YWA1 is then methylated by bfoE at position C-6 to yield foncesin which is further methylated at position C-8 by bfoD to produce fonsecin B. A key enzyme in the biosynthetic pathway is the cytochrome P450 monooxygenase bfoB which catalyzes the oxidative dimerization of fonsecin B to bifonsecin B. Bfob also catalyzes the oxidative dimerization of rubrofusarin B into nigerone. The stereoselectivity of bfoB is influenced by the two natural monomeric substrates; homodimerization of fonsecin B yields a stereochemically pure biaryl, M-foncerine B, while rubrofusarin B yields a mixture of enantiomers M- and P-nigerone. The chain is O-methyltransferase bfoE from Aspergillus brasiliensis (strain CBS 101740 / IMI 381727 / IBT 21946).